The primary structure comprises 567 residues: Nucleolus and neural progenitor protein (567 aa).

A Phosphoserine modification is found at serine 265. The disordered stretch occupies residues 437–457; sequence SKHHLRQRRSQNKFLRRQRKP. Residues 442–460 form a nuclear localization signal region; sequence RQRRSQNKFLRRQRKPQRK.

The protein belongs to the nepro family.

Its subcellular location is the nucleus. The protein resides in the nucleolus. May play a role in cortex development as part of the Notch signaling pathway. Downstream of Notch may repress the expression of proneural genes and inhibit neuronal differentiation thereby maintaining neural progenitors. May also play a role in preimplentation embryo development. The sequence is that of Nucleolus and neural progenitor protein from Homo sapiens (Human).